A 285-amino-acid chain; its full sequence is Inhibitor of growth protein 5 (285 aa).

Residues 116–225 (EKASSTRAKS…ATHPSDVMDM (110 aa)) are disordered. Over residues 131-149 (KKGRKKTKDSKTTGKKKKS) the composition is skewed to basic residues. Residues 160–178 (NNQSNANSSVNSSSNAGQG) are compositionally biased toward low complexity. The PHD-type zinc-finger motif lies at 232-281 (PTYCLCHQVSYGEMIGCDNPDCPIEWFHFACVGLTTKPKGKWFCPKCTQD). Zn(2+) contacts are provided by Cys-235, Cys-237, Cys-248, Cys-253, His-259, Cys-262, Cys-275, and Cys-278.

It belongs to the ING family. Component of the Enok complex composed of at least Br140, enok, Eaf6 and Ing5.

It localises to the nucleus. It is found in the chromosome. Its function is as follows. Component of the Enok complex which has a histone H3 acetyltransferase activity. In Drosophila melanogaster (Fruit fly), this protein is Inhibitor of growth protein 5.